We begin with the raw amino-acid sequence, 1128 residues long: Testis-expressed protein 2 (1128 aa).

Disordered stretches follow at residues 1 to 28, 71 to 99, and 130 to 279; these read MTSL…VQRS, AKED…GLSV, and PLAL…FFKV. Low complexity predominate over residues 130–186; that stretch reads PLALSPGSSSSGPLASSPSVSSLSEQKTSSSSPLSSPSKSPVLSSSASSSALSSAKP. Ser-195 bears the Phosphoserine mark. The span at 248–274 shows a compositional bias: polar residues; the sequence is QFTQPRNTGGDSKTAPSSPLTSPSDTR. Phosphothreonine is present on Thr-261. A phosphoserine mark is found at Ser-264, Ser-265, Ser-269, and Ser-294. Residues 345–387 form a disordered region; that stretch reads KEEEGDSEGEGYGSDSNTSRSDHLKPTEDASKEVEPKGSQASS. A compositionally biased stretch (basic and acidic residues) spans 364–380; it reads RSDHLKPTEDASKEVEP. 2 helical membrane passes run 473–493 and 495–515; these read TLGF…PYYM and GLFL…WFFT. Asn-593 is a glycosylation site (N-linked (GlcNAc...) asparagine). Residues 645-671 are compositionally biased toward basic and acidic residues; the sequence is SKAQSDKEATEEKPPPEKELPSEDLKK. Disordered stretches follow at residues 645–688, 716–765, 787–821, and 945–981; these read SKAQ…DPIL, RKPA…QKEL, QDNR…EEEQ, and ADSD…GYVG. Phosphoserine is present on residues Ser-733, Ser-739, Ser-745, Ser-749, Ser-752, Ser-799, and Ser-816. Residues 736-751 are compositionally biased toward low complexity; the sequence is SSPSGHLSHSRSSSKG. Residues 796 to 806 are compositionally biased toward polar residues; the sequence is PVQSAESSPTA. The SMP-LTD domain maps to 817-1102; it reads EEEEQEAWVN…MPNMDDVYIP (286 aa). The span at 946–963 shows a compositional bias: acidic residues; sequence DSDEESSSAGSSEEDDPP.

It is found in the endoplasmic reticulum membrane. It localises to the nucleus membrane. Functionally, during endoplasmic reticulum (ER) stress or when cellular ceramide levels increase, may induce contacts between the ER and medial-Golgi complex to facilitate non-vesicular transport of ceramides from the ER to the Golgi complex where they are converted to complex sphingolipids, preventing toxic ceramide accumulation. The protein is Testis-expressed protein 2 (Tex2) of Mus musculus (Mouse).